The sequence spans 697 residues: Potassium-transporting ATPase ATP-binding subunit (697 aa).

4 helical membrane passes run 55-75 (PIMFVVEIGFIITFILSFLPS), 79-99 (SIPGWFNITVSLILLFTVLFA), 245-265 (LTLIFLIVVVTLPIFTNYLGF), and 271-291 (VLVALLVCLIPTTIGGLLSAI). Residue D324 is the 4-aspartylphosphate intermediate of the active site. ATP-binding positions include D361, E365, 393 to 400 (FKAETRMS), and K412. Residues D535 and D539 each coordinate Mg(2+). A run of 3 helical transmembrane segments spans residues 605-625 (FAIIPAMFTLAIPQMEALNIM), 633-653 (AILSALIFNAVIIPLLIPLAM), and 677-697 (GGVIVPFIGIKVIDIIVGLFI).

Belongs to the cation transport ATPase (P-type) (TC 3.A.3) family. Type IA subfamily. In terms of assembly, the system is composed of three essential subunits: KdpA, KdpB and KdpC.

It is found in the cell membrane. The catalysed reaction is K(+)(out) + ATP + H2O = K(+)(in) + ADP + phosphate + H(+). In terms of biological role, part of the high-affinity ATP-driven potassium transport (or Kdp) system, which catalyzes the hydrolysis of ATP coupled with the electrogenic transport of potassium into the cytoplasm. This subunit is responsible for energy coupling to the transport system and for the release of the potassium ions to the cytoplasm. This chain is Potassium-transporting ATPase ATP-binding subunit, found in Bacillus cereus (strain G9842).